The chain runs to 418 residues: Maltoporin (418 aa).

The signal sequence occupies residues 1–26; it reads MLPMNRNTLGLAVTIATVFVSSTVTA.

It belongs to the porin LamB (TC 1.B.3) family. As to quaternary structure, homotrimer formed of three 18-stranded antiparallel beta-barrels, containing three independent channels.

Its subcellular location is the cell outer membrane. It catalyses the reaction beta-maltose(in) = beta-maltose(out). Its function is as follows. Involved in the transport of maltose and maltodextrins. This is Maltoporin from Photobacterium profundum (strain SS9).